The chain runs to 601 residues: 1-deoxy-D-xylulose-5-phosphate synthase (601 aa).

Thiamine diphosphate contacts are provided by residues His-63 and 104–106 (GHS). Residue Asp-135 participates in Mg(2+) binding. Residues 136-137 (GS), Asn-164, Tyr-272, and Glu-353 contribute to the thiamine diphosphate site. Position 164 (Asn-164) interacts with Mg(2+).

This sequence belongs to the transketolase family. DXPS subfamily. Homodimer. Mg(2+) serves as cofactor. The cofactor is thiamine diphosphate.

The catalysed reaction is D-glyceraldehyde 3-phosphate + pyruvate + H(+) = 1-deoxy-D-xylulose 5-phosphate + CO2. The protein operates within metabolic intermediate biosynthesis; 1-deoxy-D-xylulose 5-phosphate biosynthesis; 1-deoxy-D-xylulose 5-phosphate from D-glyceraldehyde 3-phosphate and pyruvate: step 1/1. Catalyzes the acyloin condensation reaction between C atoms 2 and 3 of pyruvate and glyceraldehyde 3-phosphate to yield 1-deoxy-D-xylulose-5-phosphate (DXP). The protein is 1-deoxy-D-xylulose-5-phosphate synthase of Aliarcobacter butzleri (strain RM4018) (Arcobacter butzleri).